Consider the following 2026-residue polypeptide: E3 ubiquitin-protein ligase TRIP12 (2026 aa).

Composition is skewed to polar residues over residues 1 to 10 (MSNRPNSNPG), 32 to 42 (GRNSLSLSVGS), and 73 to 84 (SSVSEPNITFSP). A disordered region spans residues 1-437 (MSNRPNSNPG…SGESESDDSE (437 aa)). Composition is skewed to low complexity over residues 94-112 (SSHFSDSSASGPSAPAISP), 135-161 (AEPAPARALSKKSSSYPGPSGASSTPS), 171-188 (LLSSSSSSSLPSSSSAAG), and 199-241 (AAKP…SSAA). Residues 359–371 (QKTTGSCASTSRR) show a composition bias toward polar residues. Positions 379–391 (GAAEARRQEKMAD) are enriched in basic and acidic residues. A compositionally biased stretch (polar residues) spans 392–404 (SDNNQDGANSSAA). Low complexity predominate over residues 412–430 (GASASSSVAGAVGMTTSGE). The WWE domain maps to 789–876 (MLKKGSAQTT…DPELAKCFIK (88 aa)). 2 disordered regions span residues 1008-1123 (SNVT…SVSN) and 1441-1470 (GCKDAVGGKRGRAQTAPTKTSPRNAKKQDE). Over residues 1040–1053 (KRKRLPKRGPRRPK) the composition is skewed to basic residues. A compositionally biased stretch (basic and acidic residues) spans 1056–1065 (PPRDDDKVDN). Residues 1068–1079 (KSPTTTQSPKSS) show a composition bias toward low complexity. Residues 1094-1104 (TQANSANSEPS) are compositionally biased toward polar residues. Residues 1530 to 1604 (EIIPTGEFIN…AMQRLLDTNP (75 aa)) form a K-box region. An HECT domain is found at 1919–2026 (PDHGYTHDSR…REGQQSFHLS (108 aa)). The Glycyl thioester intermediate role is filled by Cys1993.

The protein belongs to the UPL family. K-HECT subfamily.

Its subcellular location is the nucleus. It is found in the nucleoplasm. It carries out the reaction S-ubiquitinyl-[E2 ubiquitin-conjugating enzyme]-L-cysteine + [acceptor protein]-L-lysine = [E2 ubiquitin-conjugating enzyme]-L-cysteine + N(6)-ubiquitinyl-[acceptor protein]-L-lysine.. It participates in protein modification; protein ubiquitination. E3 ubiquitin-protein ligase involved in ubiquitin fusion degradation (UFD) pathway and regulation of DNA repair. Part of the ubiquitin fusion degradation (UFD) pathway, a process that mediates ubiquitination of protein at their N-terminus, regardless of the presence of lysine residues in target proteins. Acts as a key regulator of DNA damage response by acting as a suppressor of RNF168, an E3 ubiquitin-protein ligase that promotes accumulation of 'Lys-63'-linked histone H2A and H2AX at DNA damage sites, thereby acting as a guard against excessive spreading of ubiquitinated chromatin at damaged chromosomes. This Danio rerio (Zebrafish) protein is E3 ubiquitin-protein ligase TRIP12 (trip12).